We begin with the raw amino-acid sequence, 339 residues long: MENLNALVDAALAEVEQAGDIRALDDVRVKYLGKKGEISALMKGLGKLSAEERPQAGAVINEGKQKVQDAIADRKSAMEEAALKQQLASETVDVTLPGRGELPGGLHPVNRMRRRIEDFFLRLGFDISEGPEVEDDFHNFEALNIPSHHPARAMHDTFYFGDGRLLRTHTSPVQVRVMEQGKPPFRIIAPGRVYRCDSDLTHTPMFHQVEGLLVDKGITFADLRGTVAEFLRYTFEVEDLPVRFRPSYFPFTEPSAEVDVGCVSCGGEGCRVCSHTGWIEIMGCGMVHPTVLEAGGVDAEEYSGFAFGMGIERIAMLRYGVNDLRLFFENDTRFLSQFG.

E253 serves as a coordination point for Mg(2+).

It belongs to the class-II aminoacyl-tRNA synthetase family. Phe-tRNA synthetase alpha subunit type 1 subfamily. In terms of assembly, tetramer of two alpha and two beta subunits. Mg(2+) is required as a cofactor.

The protein resides in the cytoplasm. The enzyme catalyses tRNA(Phe) + L-phenylalanine + ATP = L-phenylalanyl-tRNA(Phe) + AMP + diphosphate + H(+). The sequence is that of Phenylalanine--tRNA ligase alpha subunit from Alcanivorax borkumensis (strain ATCC 700651 / DSM 11573 / NCIMB 13689 / SK2).